Consider the following 245-residue polypeptide: Polyhedrin (245 aa).

Belongs to the polyhedrin family.

Functionally, major component of the virus occlusion bodies, which are large proteinaceous structures (polyhedra), that protect the virus from the outside environment for extended periods until they are ingested by insect larvae. The polypeptide is Polyhedrin (Lepidoptera (butterflies and moths)).